The primary structure comprises 168 residues: MKHRVVGRRLDRTTEHRTAMLRNMVTSLLRHERIVTTTPKAKELKRFADKVITLAKRGSAHHRRLANREVKDVEVLNKLFDSIAGRFKARPGGYTRIVRVGRRAGDNADMSVIELVDRAAAEAEGGEEKAEQKTEKKAAKAKEPKAAKAPKKAAAKPKAKAEKKGAEE.

The span at 121-146 shows a compositional bias: basic and acidic residues; sequence AEAEGGEEKAEQKTEKKAAKAKEPKA. The interval 121–168 is disordered; that stretch reads AEAEGGEEKAEQKTEKKAAKAKEPKAAKAPKKAAAKPKAKAEKKGAEE. Basic residues predominate over residues 148–158; that stretch reads KAPKKAAAKPK. The span at 159 to 168 shows a compositional bias: basic and acidic residues; sequence AKAEKKGAEE.

This sequence belongs to the bacterial ribosomal protein bL17 family. Part of the 50S ribosomal subunit. Contacts protein L32.

This Anaeromyxobacter sp. (strain Fw109-5) protein is Large ribosomal subunit protein bL17.